Here is a 712-residue protein sequence, read N- to C-terminus: Elongation factor G (712 aa).

Positions 8 to 290 (TRYRNIGISA…AVIEFLPSPT (283 aa)) constitute a tr-type G domain. Residues 17–24 (AHIDAGKT), 88–92 (DTPGH), and 142–145 (NKMD) contribute to the GTP site.

This sequence belongs to the TRAFAC class translation factor GTPase superfamily. Classic translation factor GTPase family. EF-G/EF-2 subfamily.

It localises to the cytoplasm. Functionally, catalyzes the GTP-dependent ribosomal translocation step during translation elongation. During this step, the ribosome changes from the pre-translocational (PRE) to the post-translocational (POST) state as the newly formed A-site-bound peptidyl-tRNA and P-site-bound deacylated tRNA move to the P and E sites, respectively. Catalyzes the coordinated movement of the two tRNA molecules, the mRNA and conformational changes in the ribosome. This chain is Elongation factor G, found in Acinetobacter baumannii (strain SDF).